A 182-amino-acid polypeptide reads, in one-letter code: MSMKGKETMSNEKIVVGKFGATYGIRGWLKVFSYTDNAESIFDYSPWYINQKGKWVEYKVESWKRHNKGMVAKLEGMDVREDAHLMTNFEIAIDPAVLPELSEDEFYWRELFGMHVVTTKGYDLGVVTDMLETGSNDVLVVKANLKDAFGQKERLIPFLEEQVIIKVDREAQRIEVDWDPGF.

Positions 103-182 (EDEFYWRELF…RIEVDWDPGF (80 aa)) constitute a PRC barrel domain.

This sequence belongs to the RimM family. As to quaternary structure, binds ribosomal protein uS19.

It is found in the cytoplasm. An accessory protein needed during the final step in the assembly of 30S ribosomal subunit, possibly for assembly of the head region. Essential for efficient processing of 16S rRNA. May be needed both before and after RbfA during the maturation of 16S rRNA. It has affinity for free ribosomal 30S subunits but not for 70S ribosomes. This chain is Ribosome maturation factor RimM, found in Vibrio parahaemolyticus serotype O3:K6 (strain RIMD 2210633).